The following is a 175-amino-acid chain: Putative metal-dependent hydrolase BPUM_0784 (175 aa).

His-65, His-157, and His-161 together coordinate Zn(2+).

It belongs to the metal hydrolase YfiT family. Homodimer. Zn(2+) is required as a cofactor.

Its subcellular location is the cytoplasm. Its function is as follows. Possible metal-dependent hydrolase. The polypeptide is Putative metal-dependent hydrolase BPUM_0784 (Bacillus pumilus (strain SAFR-032)).